A 267-amino-acid chain; its full sequence is Type III pantothenate kinase (267 aa).

6-13 (DSGNSRLK) contributes to the ATP binding site. Residues Tyr96 and 103 to 106 (GADR) each bind substrate. Asp105 functions as the Proton acceptor in the catalytic mechanism. ATP is bound at residue Thr131. A substrate-binding site is contributed by Thr181.

It belongs to the type III pantothenate kinase family. Homodimer. It depends on NH4(+) as a cofactor. K(+) is required as a cofactor.

The protein localises to the cytoplasm. It carries out the reaction (R)-pantothenate + ATP = (R)-4'-phosphopantothenate + ADP + H(+). It participates in cofactor biosynthesis; coenzyme A biosynthesis; CoA from (R)-pantothenate: step 1/5. Catalyzes the phosphorylation of pantothenate (Pan), the first step in CoA biosynthesis. The sequence is that of Type III pantothenate kinase from Bordetella bronchiseptica (strain ATCC BAA-588 / NCTC 13252 / RB50) (Alcaligenes bronchisepticus).